Reading from the N-terminus, the 215-residue chain is Glycerol-3-phosphate acyltransferase (215 aa).

The next 5 membrane-spanning stretches (helical) occupy residues 14 to 34 (SSSALIVLAYLIGSIPFAVVV), 63 to 83 (TAAALTLLGDAAKGWFALWLA), 92 to 112 (WGAYALVALAVFLGHLYPLFL), 128 to 148 (MAIEPWLAVATIATWLIVAVF), and 154 to 174 (LAALVAAFFAPVYYVFGSGAA).

It belongs to the PlsY family. In terms of assembly, probably interacts with PlsX.

Its subcellular location is the cell inner membrane. The catalysed reaction is an acyl phosphate + sn-glycerol 3-phosphate = a 1-acyl-sn-glycero-3-phosphate + phosphate. It participates in lipid metabolism; phospholipid metabolism. Its function is as follows. Catalyzes the transfer of an acyl group from acyl-phosphate (acyl-PO(4)) to glycerol-3-phosphate (G3P) to form lysophosphatidic acid (LPA). This enzyme utilizes acyl-phosphate as fatty acyl donor, but not acyl-CoA or acyl-ACP. The chain is Glycerol-3-phosphate acyltransferase from Bordetella bronchiseptica (strain ATCC BAA-588 / NCTC 13252 / RB50) (Alcaligenes bronchisepticus).